The following is a 242-amino-acid chain: UPF0246 protein SPP_1571 (242 aa).

The protein belongs to the UPF0246 family.

The chain is UPF0246 protein SPP_1571 from Streptococcus pneumoniae (strain P1031).